The following is a 388-amino-acid chain: Omega-hydroxy-beta-dihydromenaquinone-9 sulfotransferase Stf3 (388 aa).

It belongs to the Stf3 family.

The enzyme catalyses omega-hydroxy-beta-dihydromenaquinone-9 + 3'-phosphoadenylyl sulfate = omega-sulfo-beta-dihydromenaquinone-9 + adenosine 3',5'-bisphosphate + H(+). Involved in the biosynthesis of sulfomenaquinone (SMK, initially named S881 on the basis of its mass), which is localized in the outer envelope of M.bovis and negatively regulates its virulence. Catalyzes the transfer of a sulfonate group from 3'-phosphoadenosine-5'-phosphosulfate (PAPS) to omega-hydroxy-beta-dihydromenaquinone-9, generating omega-sulfo-beta-dihydromenaquinone-9 (sulfomenaquinone). The sequence is that of Omega-hydroxy-beta-dihydromenaquinone-9 sulfotransferase Stf3 from Mycobacterium bovis (strain ATCC BAA-935 / AF2122/97).